The following is an 804-amino-acid chain: Leucine--tRNA ligase (804 aa).

The 'HIGH' region motif lies at 39–50; it reads PFPSGKGLHVGH. Residues 573–577 carry the 'KMSKS' region motif; that stretch reads KMSKS. Lysine 576 serves as a coordination point for ATP.

This sequence belongs to the class-I aminoacyl-tRNA synthetase family.

It is found in the cytoplasm. It carries out the reaction tRNA(Leu) + L-leucine + ATP = L-leucyl-tRNA(Leu) + AMP + diphosphate. The polypeptide is Leucine--tRNA ligase (Lactobacillus gasseri (strain ATCC 33323 / DSM 20243 / BCRC 14619 / CIP 102991 / JCM 1131 / KCTC 3163 / NCIMB 11718 / NCTC 13722 / AM63)).